A 23-amino-acid chain; its full sequence is Augerpeptide hhe7a (23 aa).

Disulfide bonds link Cys3–Cys11, Cys6–Cys19, and Cys10–Cys22.

In terms of tissue distribution, expressed by the venom duct.

Its subcellular location is the secreted. In terms of biological role, causes abnormal twist followed by immobility when injected into C.elegans. This Hastula hectica (Sea snail) protein is Augerpeptide hhe7a.